The following is a 159-amino-acid chain: 3-hydroxyacyl-[acyl-carrier-protein] dehydratase FabZ (159 aa).

Residue His58 is part of the active site.

This sequence belongs to the thioester dehydratase family. FabZ subfamily.

The protein localises to the cytoplasm. The catalysed reaction is a (3R)-hydroxyacyl-[ACP] = a (2E)-enoyl-[ACP] + H2O. Its function is as follows. Involved in unsaturated fatty acids biosynthesis. Catalyzes the dehydration of short chain beta-hydroxyacyl-ACPs and long chain saturated and unsaturated beta-hydroxyacyl-ACPs. In Helicobacter pylori (strain J99 / ATCC 700824) (Campylobacter pylori J99), this protein is 3-hydroxyacyl-[acyl-carrier-protein] dehydratase FabZ.